Here is a 445-residue protein sequence, read N- to C-terminus: KIN17-like protein (445 aa).

A C2H2-type zinc finger spans residues 26 to 50 (WYCQLCEKQCRDENGFKCHISSESH). 2 stretches are compositionally biased toward low complexity: residues 215–229 (NTTT…TTTN) and 239–253 (NDNN…DQTN). The tract at residues 215–256 (NTTTTTTNTTTTTTNKNIFDKLKTNDNNSSNNNYNDQTNPKP) is disordered.

This sequence belongs to the KIN17 family.

The polypeptide is KIN17-like protein (Dictyostelium discoideum (Social amoeba)).